We begin with the raw amino-acid sequence, 625 residues long: Phosphomethylpyrimidine synthase (625 aa).

Residues N230, M259, Y288, H324, 344-346 (SRG), 385-388 (DGLR), and E424 contribute to the substrate site. H428 provides a ligand contact to Zn(2+). Position 451 (Y451) interacts with substrate. Zn(2+) is bound at residue H492. C572, C575, and C580 together coordinate [4Fe-4S] cluster.

Belongs to the ThiC family. As to quaternary structure, homodimer. It depends on [4Fe-4S] cluster as a cofactor.

It carries out the reaction 5-amino-1-(5-phospho-beta-D-ribosyl)imidazole + S-adenosyl-L-methionine = 4-amino-2-methyl-5-(phosphooxymethyl)pyrimidine + CO + 5'-deoxyadenosine + formate + L-methionine + 3 H(+). The protein operates within cofactor biosynthesis; thiamine diphosphate biosynthesis. In terms of biological role, catalyzes the synthesis of the hydroxymethylpyrimidine phosphate (HMP-P) moiety of thiamine from aminoimidazole ribotide (AIR) in a radical S-adenosyl-L-methionine (SAM)-dependent reaction. The protein is Phosphomethylpyrimidine synthase of Xanthomonas campestris pv. campestris (strain 8004).